The chain runs to 158 residues: Rhombotin-2 (158 aa).

2 consecutive LIM zinc-binding domains span residues 30-89 (CGGC…RLFG) and 94-153 (CASC…EWTK).

As to quaternary structure, interacts via its LIM domains with ELF2 and LDB1. Also interacts with basic helix-loop-helix protein TAL1/SCL and can assemble in a complex with LMO2 and TAL1/SCL. Interacts with BEX2 and KDM5A.

Its subcellular location is the nucleus. Its function is as follows. Acts with TAL1/SCL to regulate red blood cell development. Also acts with LDB1 to maintain erythroid precursors in an immature state. The protein is Rhombotin-2 (LMO2) of Homo sapiens (Human).